The sequence spans 169 residues: Peptide deformylase (169 aa).

The Fe cation site is built by Cys91 and His133. Residue Glu134 is part of the active site. A Fe cation-binding site is contributed by His137.

The protein belongs to the polypeptide deformylase family. The cofactor is Fe(2+).

The catalysed reaction is N-terminal N-formyl-L-methionyl-[peptide] + H2O = N-terminal L-methionyl-[peptide] + formate. Its function is as follows. Removes the formyl group from the N-terminal Met of newly synthesized proteins. Requires at least a dipeptide for an efficient rate of reaction. N-terminal L-methionine is a prerequisite for activity but the enzyme has broad specificity at other positions. The polypeptide is Peptide deformylase (Escherichia coli (strain SMS-3-5 / SECEC)).